Reading from the N-terminus, the 859-residue chain is Leucine--tRNA ligase (859 aa).

Positions P42 to H52 match the 'HIGH' region motif. The 'KMSKS' region motif lies at K618–S622. ATP is bound at residue K621.

The protein belongs to the class-I aminoacyl-tRNA synthetase family.

The protein localises to the cytoplasm. It catalyses the reaction tRNA(Leu) + L-leucine + ATP = L-leucyl-tRNA(Leu) + AMP + diphosphate. This Shewanella sp. (strain MR-4) protein is Leucine--tRNA ligase.